A 1033-amino-acid polypeptide reads, in one-letter code: Calcium-transporting ATPase 3, plasma membrane-type (1033 aa).

Residues 1–180 (MHSGVNGCCP…FVWEALEDTT (180 aa)) lie on the Cytoplasmic side of the membrane. 2 helical membrane-spanning segments follow: residues 181 to 201 (LIIL…TEGW) and 204 to 224 (GAHD…VTGT). At 225 to 268 (SNYQQSLQFRDLDKEKRKILVQVTRNGLRQRVLIDDLLPGDAVH) the chain is on the cytoplasmic side. 2 consecutive transmembrane segments (helical) span residues 269 to 289 (LAVG…SVLV) and 362 to 382 (IGKI…QGII). The Cytoplasmic portion of the chain corresponds to 383-405 (GQKYLDGLLLSWSGDDVLEILDH). The chain crosses the membrane as a helical span at residues 406-426 (FAVAVTIVVVAVPEGLPLAVT). Residue Asp461 is the 4-aspartylphosphate intermediate of the active site. Asp762 and Asp766 together coordinate Mg(2+). Residues 823–843 (FQLTVNVVALLVNFTSACFTG) form a helical membrane-spanning segment. Topologically, residues 844 to 846 (DAP) are cytoplasmic. 2 helical membrane-spanning segments follow: residues 847-867 (LTAV…ALAL) and 928-948 (IVLN…NEIS). Topologically, residues 949 to 965 (SREMEDINVLRGMAGNS) are cytoplasmic. 2 helical membrane passes run 966–986 (IFLG…QFLG) and 999–1019 (WLIS…IKLI). Over 1020-1033 (AVEPHEKADTRRTP) the chain is Cytoplasmic.

The protein belongs to the cation transport ATPase (P-type) (TC 3.A.3) family. Type IIB subfamily.

The protein resides in the membrane. The catalysed reaction is Ca(2+)(in) + ATP + H2O = Ca(2+)(out) + ADP + phosphate + H(+). Its activity is regulated as follows. Activated by calmodulin. In terms of biological role, this magnesium-dependent enzyme catalyzes the hydrolysis of ATP coupled with the translocation of calcium from the cytosol out of the cell, into the endoplasmic reticulum, or into organelles. The chain is Calcium-transporting ATPase 3, plasma membrane-type from Oryza sativa subsp. japonica (Rice).